The sequence spans 196 residues: Agamous-like MADS-box protein AGL70 (196 aa).

In terms of domain architecture, MADS-box spans 1-61 (MGRRKVEIKR…GKLYDSASGD (61 aa)). Residues 8 to 15 (IKRIENKS) carry the Nuclear localization signal motif. A K-box domain is found at 80-170 (ALDLAEKIRN…ASQVGKKTFL (91 aa)).

Mostly expressed in roots, leaves and flowers, and, to a lower extent, in inflorescence, siliques, pollen and shoots.

It localises to the nucleus. In terms of biological role, probable transcription factor involved in the negative regulation of flowering time, probably through the photoperiodic and vernalization pathways; more efficient in cv. Landsberg erecta than in cv. Columbia background. Prevents premature flowering. Involved in the modulation of vernalization impact on flowering according to genotype acclimation to altitude. The sequence is that of Agamous-like MADS-box protein AGL70 from Arabidopsis thaliana (Mouse-ear cress).